A 182-amino-acid polypeptide reads, in one-letter code: MIELLLLSLALSMDAFAVSLGLGARFGYNKRESLRPALSFGIFQGIMPLLGFFVGVTFIAFISAFDHYLAFGILALIGAKMIYEGLSQSEEERLDELSHRTLLILSIATSIDALAAGVSLHLIDVNVFLSCTIIAFTTFLLSYLGVLWGKRAGEQCKRGAEILGGVILIGIGSKILLEHLFF.

6 helical membrane-spanning segments follow: residues 4 to 24 (LLLL…GLGA), 42 to 62 (IFQG…IAFI), 63 to 83 (SAFD…KMIY), 103 to 123 (LILS…LHLI), 127 to 147 (VFLS…LGVL), and 162 to 182 (ILGG…HLFF).

The protein belongs to the MntP (TC 9.B.29) family.

The protein resides in the cell inner membrane. Its function is as follows. Probably functions as a manganese efflux pump. This is Putative manganese efflux pump MntP 1 from Wolinella succinogenes (strain ATCC 29543 / DSM 1740 / CCUG 13145 / JCM 31913 / LMG 7466 / NCTC 11488 / FDC 602W) (Vibrio succinogenes).